We begin with the raw amino-acid sequence, 134 residues long: Small ribosomal subunit protein uS12 (134 aa).

The segment at 1-26 (MPTIQQLVRKGRESFADKSKSPALNS) is disordered. The span at 10–20 (KGRESFADKSK) shows a compositional bias: basic and acidic residues. 3-methylthioaspartic acid is present on Asp-89. Residues 103-134 (DTAGVNGRTQRRSKYGAKRPKPGQAPAAKGKK) form a disordered region. A compositionally biased stretch (basic residues) spans 111 to 123 (TQRRSKYGAKRPK). Positions 124 to 134 (PGQAPAAKGKK) are enriched in low complexity.

Belongs to the universal ribosomal protein uS12 family. Part of the 30S ribosomal subunit. Contacts proteins S8 and S17. May interact with IF1 in the 30S initiation complex.

Functionally, with S4 and S5 plays an important role in translational accuracy. Interacts with and stabilizes bases of the 16S rRNA that are involved in tRNA selection in the A site and with the mRNA backbone. Located at the interface of the 30S and 50S subunits, it traverses the body of the 30S subunit contacting proteins on the other side and probably holding the rRNA structure together. The combined cluster of proteins S8, S12 and S17 appears to hold together the shoulder and platform of the 30S subunit. This is Small ribosomal subunit protein uS12 from Porphyromonas gingivalis (strain ATCC BAA-308 / W83).